Reading from the N-terminus, the 222-residue chain is Elongation factor 1-beta' (222 aa).

The tract at residues 71–113 (SQGTSPLTAGAKPTAPAPAAKDDDDDDVDLFGSGDEEEDAEAE) is disordered. The segment covering 78 to 89 (TAGAKPTAPAPA) has biased composition (low complexity). Over residues 92–111 (DDDDDDVDLFGSGDEEEDAE) the composition is skewed to acidic residues.

Belongs to the EF-1-beta/EF-1-delta family. As to quaternary structure, EF-1 is composed of 4 subunits: alpha, beta, beta' and gamma. In terms of processing, phosphorylated.

Its function is as follows. EF-1-beta and EF-1-beta' stimulate the exchange of GDP bound to EF-1-alpha to GTP. The polypeptide is Elongation factor 1-beta' (Bombyx mori (Silk moth)).